The primary structure comprises 67 residues: Large ribosomal subunit protein bL31 (67 aa).

Cysteine 16, cysteine 18, cysteine 38, and cysteine 41 together coordinate Zn(2+).

It belongs to the bacterial ribosomal protein bL31 family. Type A subfamily. In terms of assembly, part of the 50S ribosomal subunit. Zn(2+) serves as cofactor.

In terms of biological role, binds the 23S rRNA. The sequence is that of Large ribosomal subunit protein bL31 from Thioalkalivibrio sulfidiphilus (strain HL-EbGR7).